The chain runs to 546 residues: SusD-like protein BACOVA_02651 (546 aa).

A signal peptide spans 1-21; sequence MRIFMKSKLLVIATTALLFAA. The N-palmitoyl cysteine moiety is linked to residue Cys-22. Cys-22 carries the S-diacylglycerol cysteine lipid modification.

Belongs to the SusD family.

Its subcellular location is the cell outer membrane. The protein operates within glucan metabolism; xyloglucan degradation. In terms of biological role, polysaccharide-binding protein present at the surface of the cell. Probably mediates xyloglucan-binding before xyloglucan transport in the periplasm for degradation. This Bacteroides ovatus (strain ATCC 8483 / DSM 1896 / JCM 5824 / BCRC 10623 / CCUG 4943 / NCTC 11153) protein is SusD-like protein BACOVA_02651.